A 1046-amino-acid chain; its full sequence is MEPLRKRVKVYQLDNSGKWDDKGTGHVSCIYVDALCAMGLIVRSESDNSVILQTRLSAEDIYQKQQDSLIVWTEPDSQLDLALSFQDSLGCQDIWENILQYQNQRTGSCDSVDLDLPPVSINNLQTINELLEASLPMLDKDKIINSIFKEDLVRSLLDLFDEIEKSGEGGVHLFQIFNIFKNLILFNDTSILEVILSEDYLVRVMGALEYDPEISENNRIKHREFLNQQVVFKQVIKFPSKSLIGTIHQTFRIQYLKDVVLPRVLDDVTFSSLNSLIYFNNIDIVSQIQNDSDFLENLFSEIQKSEKNSEERKDLILFLQDLCNLAKGLQIQSKSTFFTVVVSLGLFKTLSAILDDENVQTRVSCTEIVLSTLLHDPEILRSYLCSPTSGNSKFLVQLINLFITDKDIGVKNQIVEIIKTLLEADSYDSSDFFRLFYDKGIDLLVSPLNEVYKGEPTIPGDPSSNLDSFVLYNIMELVIYCIKHHCYRIKHFIVEEGIAKKILRYTNPTGSGGGGGGGGNSERYLILGSIRFFRSMVNMKDDLYNQHIIQENLFEPIIEVFKSNISRYNLLNSAIIELFQYIYKENIRDLIVYLVERYRELFESVTYTDVLKQLILKYEQIKDSSFESPETSCNNNDSSSNDIDSKPIIGNNKINHNYQRTQREIDEEEEEAYFNRDDDSEDSDDEDELIPISINNNNNNNNNNKQICTNNENNMEKNDDNIEKDNENTNNGNGSSHIKIVDYEDEDDEDDEINKSVESDDIVEKHEIIDKNEKKDEIMKENNDSDNDDNDNNDNDNDNDNNSDIENKNHLNNNGNNENNENNDDVQDKSNNKNNSDKINEDEKIEKQDEMKENLEMEEIDEKVKEKQPKDIKKENQSQPDETVFNGKSNNSNNNNNNNNNNSNNQEIGDNRKTTPKRKLDYEKNESVVSKKIDKSNGPTSIDKDINGCDESPNKKLNNNNSNNNNNNNNNNNNNNNNNNNNNNNNNNNNNNNQNDENELSSASEEEEEQLENGKHIKKFKRGKKDSNNSSNNSNNSSPTPSELHV.

The WH1 domain maps to 1–101 (MEPLRKRVKV…QDIWENILQY (101 aa)). Residues 626-1046 (FESPETSCNN…SSPTPSELHV (421 aa)) form a disordered region. Over residues 665–689 (IDEEEEEAYFNRDDDSEDSDDEDEL) the composition is skewed to acidic residues. Low complexity predominate over residues 695–713 (NNNNNNNNNNKQICTNNEN). The segment covering 714-727 (NMEKNDDNIEKDNE) has biased composition (basic and acidic residues). Acidic residues predominate over residues 743-752 (YEDEDDEDDE). Residues 753-783 (INKSVESDDIVEKHEIIDKNEKKDEIMKENN) show a composition bias toward basic and acidic residues. The segment covering 784 to 803 (DSDNDDNDNNDNDNDNDNNS) has biased composition (acidic residues). The span at 804–820 (DIENKNHLNNNGNNENN) shows a compositional bias: low complexity. 2 stretches are compositionally biased toward basic and acidic residues: residues 826–855 (VQDK…KENL) and 862–876 (EKVK…KKEN). Residues 889-905 (SNNSNNNNNNNNNNSNN) are compositionally biased toward low complexity. Residues 909-935 (GDNRKTTPKRKLDYEKNESVVSKKIDK) are compositionally biased toward basic and acidic residues. A compositionally biased stretch (low complexity) spans 958–995 (NNNNSNNNNNNNNNNNNNNNNNNNNNNNNNNNNNNNQN). The span at 996 to 1011 (DENELSSASEEEEEQL) shows a compositional bias: acidic residues. The Nuclear localization signal signature appears at 1003-1022 (ASEEEEEQLENGKHIKKFKR). The segment covering 1028–1038 (NNSSNNSNNSS) has biased composition (low complexity).

Belongs to the SMEK family. In terms of assembly, interacts with ppp4c.

The protein localises to the cytoplasm. Its subcellular location is the cell cortex. The protein resides in the nucleus. Functionally, suppresses MEK1 null cell polarity, chemotaxis, and gene expression defects. Required for proper cytokinesis during vegetative growth, timely exit from the mound stage during development, and myosin II assembly. May be a regulatory subunit of serine/threonine-protein phosphatase 4 (PP4) and may control localization of PP4 to the nucleus. Involved in the regulation of some ppp4c functions, such as developmental progression, chemotaxis, expression of stress response genes and cell movement. The polypeptide is Suppressor of Mek1 (smkA) (Dictyostelium discoideum (Social amoeba)).